Here is a 314-residue protein sequence, read N- to C-terminus: 3'-5' exoribonuclease YhaM (314 aa).

Positions 163–279 (HVVSMLNLAK…LHYIDNLDAK (117 aa)) constitute an HD domain.

Belongs to the YhaM family.

Shows a 3'-5' exoribonuclease activity. The chain is 3'-5' exoribonuclease YhaM from Bacillus velezensis (strain DSM 23117 / BGSC 10A6 / LMG 26770 / FZB42) (Bacillus amyloliquefaciens subsp. plantarum).